Here is a 157-residue protein sequence, read N- to C-terminus: UPF0587 protein C2D10.03c (157 aa).

Residues Cys34, Cys37, Cys68, and Cys71 each coordinate Zn(2+).

Belongs to the UPF0587 family.

This Schizosaccharomyces pombe (strain 972 / ATCC 24843) (Fission yeast) protein is UPF0587 protein C2D10.03c.